A 439-amino-acid polypeptide reads, in one-letter code: MAAARCWRPLLRGPRLSLHTAANAAATATETTCQDVAATPVARYPPIVASMTADSKAARLRRIERWQATVHAAESVDEKLRILTKMQFMKYMVYPQTFALNADRWYQYFTKTVFLSGLPPPPAEPEPEPEPEPEPALDLAALRAVACDCLLQEHFYLRRRRRVHRYEESEVISLPFLDQLVSTLVGLLSPHNPALAAAALDYRCPVHFYWVRGEEIIPRGHRRGRIDDLRYQIDDKPNNQIRISKQLAEFVPLDYSVPIEIPTIKCKPDKLPLFKRQYENHIFVGSKTADPCCYGHTQFHLLPDKLRRERLLRQNCADQIEVVFRANAIASLFAWTGAQAMYQGFWSEADVTRPFVSQAVITDGKYFSFFCYQLNTLALTTQADQNNPRKNICWGTQSKPLYETIEDNDVKGFNDDVLLQIVHFLLNRPKEEKSQLLEN.

The protein belongs to the mitochondrion-specific ribosomal protein mL65 family. In terms of assembly, component of the mitochondrial large ribosomal subunit (mt-LSU). Mature mammalian 55S mitochondrial ribosomes consist of a small (28S) and a large (39S) subunit. The 28S small subunit contains a 12S ribosomal RNA (12S mt-rRNA) and 30 different proteins. The 39S large subunit contains a 16S rRNA (16S mt-rRNA), a copy of mitochondrial valine transfer RNA (mt-tRNA(Val)), which plays an integral structural role, and 52 different proteins. mL65 forms a heterodimer with mL37. As to expression, heart, skeletal muscle, kidney and liver. Lower expression in placenta and peripheral blood leukocytes.

The protein resides in the mitochondrion. This Homo sapiens (Human) protein is Large ribosomal subunit protein mL65 (MRPS30).